Here is a 156-residue protein sequence, read N- to C-terminus: Probable succinate transporter subunit YjjB (156 aa).

4 consecutive transmembrane segments (helical) span residues 7-27, 54-74, 86-106, and 128-148; these read WALLQDMVLAAIPALGFAMVF, FGMNIELASLVASIMIGVIGI, VFTVAAVIPMFPGISAYTAMI, and FLKASFIVGALSIGLSLPGLW.

This sequence belongs to the ThrE exporter (TC 2.A.79) family. In terms of assembly, the transporter is composed of YjjB and YjjP.

It localises to the cell inner membrane. Involved in succinate export with YjjP. Both proteins are required for export. The protein is Probable succinate transporter subunit YjjB of Yersinia pseudotuberculosis serotype I (strain IP32953).